The primary structure comprises 20 residues: Superoxide dismutase [Mn], mitochondrial (20 aa).

It belongs to the iron/manganese superoxide dismutase family. In terms of assembly, homotetramer. The cofactor is Mn(2+).

Its subcellular location is the mitochondrion matrix. The enzyme catalyses 2 superoxide + 2 H(+) = H2O2 + O2. Its function is as follows. Destroys superoxide anion radicals which are normally produced within the cells and which are toxic to biological systems. The protein is Superoxide dismutase [Mn], mitochondrial (SODA) of Hordeum vulgare (Barley).